The primary structure comprises 257 residues: Acetylglutamate kinase (257 aa).

Substrate-binding positions include 43 to 44 (GG), Arg-65, and Asn-157. ATP is bound by residues 180–185 (DVSGIL) and 208–210 (IIT).

Belongs to the acetylglutamate kinase family. ArgB subfamily. In terms of assembly, homodimer.

It localises to the cytoplasm. The enzyme catalyses N-acetyl-L-glutamate + ATP = N-acetyl-L-glutamyl 5-phosphate + ADP. The protein operates within amino-acid biosynthesis; L-arginine biosynthesis; N(2)-acetyl-L-ornithine from L-glutamate: step 2/4. Catalyzes the ATP-dependent phosphorylation of N-acetyl-L-glutamate. The chain is Acetylglutamate kinase from Salmonella agona (strain SL483).